The following is a 618-amino-acid chain: Proline--tRNA ligase (618 aa).

Belongs to the class-II aminoacyl-tRNA synthetase family. ProS type 1 subfamily. Homodimer.

It localises to the cytoplasm. The enzyme catalyses tRNA(Pro) + L-proline + ATP = L-prolyl-tRNA(Pro) + AMP + diphosphate. In terms of biological role, catalyzes the attachment of proline to tRNA(Pro) in a two-step reaction: proline is first activated by ATP to form Pro-AMP and then transferred to the acceptor end of tRNA(Pro). As ProRS can inadvertently accommodate and process non-cognate amino acids such as alanine and cysteine, to avoid such errors it has two additional distinct editing activities against alanine. One activity is designated as 'pretransfer' editing and involves the tRNA(Pro)-independent hydrolysis of activated Ala-AMP. The other activity is designated 'posttransfer' editing and involves deacylation of mischarged Ala-tRNA(Pro). The misacylated Cys-tRNA(Pro) is not edited by ProRS. The sequence is that of Proline--tRNA ligase from Streptococcus equi subsp. zooepidemicus (strain H70).